We begin with the raw amino-acid sequence, 129 residues long: Small ribosomal subunit protein uS11 (129 aa).

The protein belongs to the universal ribosomal protein uS11 family. In terms of assembly, part of the 30S ribosomal subunit. Interacts with proteins S7 and S18. Binds to IF-3.

Its function is as follows. Located on the platform of the 30S subunit, it bridges several disparate RNA helices of the 16S rRNA. Forms part of the Shine-Dalgarno cleft in the 70S ribosome. This Salmonella typhi protein is Small ribosomal subunit protein uS11.